Consider the following 234-residue polypeptide: 2-C-methyl-D-erythritol 4-phosphate cytidylyltransferase (234 aa).

Belongs to the IspD/TarI cytidylyltransferase family. IspD subfamily.

It catalyses the reaction 2-C-methyl-D-erythritol 4-phosphate + CTP + H(+) = 4-CDP-2-C-methyl-D-erythritol + diphosphate. Its pathway is isoprenoid biosynthesis; isopentenyl diphosphate biosynthesis via DXP pathway; isopentenyl diphosphate from 1-deoxy-D-xylulose 5-phosphate: step 2/6. In terms of biological role, catalyzes the formation of 4-diphosphocytidyl-2-C-methyl-D-erythritol from CTP and 2-C-methyl-D-erythritol 4-phosphate (MEP). The chain is 2-C-methyl-D-erythritol 4-phosphate cytidylyltransferase from Shewanella sediminis (strain HAW-EB3).